Consider the following 133-residue polypeptide: U-scoloptoxin(11)-Sm1a (133 aa).

The N-terminal stretch at 1 to 19 (MIWFLAFILFLAAGELVSS) is a signal peptide.

This sequence belongs to the scoloptoxin-11 family. In terms of processing, contains 10 disulfide bonds. Expressed by the venom gland.

It is found in the secreted. The sequence is that of U-scoloptoxin(11)-Sm1a from Scolopendra morsitans (Tanzanian blue ringleg centipede).